The chain runs to 438 residues: UDP-N-acetyl-D-mannosamine dehydrogenase (438 aa).

Residues tyrosine 21, isoleucine 22, aspartate 41, arginine 46, threonine 93, and threonine 131 each coordinate NAD(+). UDP-N-acetyl-alpha-D-mannosaminouronate-binding residues include arginine 160, valine 161, lysine 212, asparagine 216, arginine 219, histidine 250, arginine 252, and glycine 263. Lysine 212 acts as the Proton donor/acceptor in catalysis. Cysteine 266 serves as the catalytic Nucleophile. Positions 323 and 324 each coordinate UDP-N-acetyl-alpha-D-mannosaminouronate. Position 331 (arginine 331) interacts with NAD(+). Lysine 409 serves as a coordination point for UDP-N-acetyl-alpha-D-mannosaminouronate.

It belongs to the UDP-glucose/GDP-mannose dehydrogenase family. In terms of assembly, homotetramer; probably dimer of dimers.

It catalyses the reaction UDP-N-acetyl-alpha-D-mannosamine + 2 NAD(+) + H2O = UDP-N-acetyl-alpha-D-mannosaminouronate + 2 NADH + 3 H(+). Its function is as follows. Catalyzes the four-electron oxidation of UDP-N-acetyl-D-mannosamine (UDP-ManNAc), reducing NAD(+) and releasing UDP-N-acetylmannosaminuronic acid (UDP-ManNAcA). The sequence is that of UDP-N-acetyl-D-mannosamine dehydrogenase (wecC) from Methanococcus aeolicus (strain ATCC BAA-1280 / DSM 17508 / OCM 812 / Nankai-3).